Here is a 283-residue protein sequence, read N- to C-terminus: Tetrahydroxynaphthalene reductase (283 aa).

The disordered stretch occupies residues 1–21 (MPAVTQPRGESKYDAIPGPLG). 39–63 (RGIGREMAMELGRRGCKVIVNYANS) contributes to the NADP(+) binding site. Substrate is bound at residue Ser164. Residue Tyr178 is the Proton acceptor of the active site.

Belongs to the short-chain dehydrogenases/reductases (SDR) family. Homotetramer.

The enzyme catalyses scytalone + NADP(+) = naphthalene-1,3,6,8-tetrol + NADPH + H(+). It participates in pigment biosynthesis; melanin biosynthesis. Its function is as follows. Catalyzes the NADPH-dependent reduction of 1,3,6,8-tetrahydroxynaphthalene (T4HN) into (+)-scytalone and 1,3,8-trihydroxynaphthalene into (-)-vermelone. This enzyme is the biochemical target of several commercially important fungicides which are used to prevent blast disease in rice plants. This is Tetrahydroxynaphthalene reductase from Pyricularia oryzae (strain 70-15 / ATCC MYA-4617 / FGSC 8958) (Rice blast fungus).